The primary structure comprises 252 residues: Protein BTG3 (252 aa).

The interval 138 to 163 (VTSDYHSGSSSSDEDTSKEVDVKPSS) is disordered.

The protein belongs to the BTG family. As to expression, ubiquitous.

Overexpression impairs serum-induced cell cycle progression from the G0/G1 to S phase. This is Protein BTG3 (Btg3) from Mus musculus (Mouse).